Here is a 350-residue protein sequence, read N- to C-terminus: Chorismate synthase (350 aa).

Arg-39 and Arg-45 together coordinate NADP(+). The segment at 85 to 104 (KDKKVPPVTRPRPGHADLPG) is disordered. FMN is bound by residues 119 to 121 (RAS), 213 to 214 (QG), Gly-258, 273 to 277 (KPIPT), and Arg-299.

It belongs to the chorismate synthase family. Homotetramer. The cofactor is FMNH2.

It catalyses the reaction 5-O-(1-carboxyvinyl)-3-phosphoshikimate = chorismate + phosphate. Its pathway is metabolic intermediate biosynthesis; chorismate biosynthesis; chorismate from D-erythrose 4-phosphate and phosphoenolpyruvate: step 7/7. Its function is as follows. Catalyzes the anti-1,4-elimination of the C-3 phosphate and the C-6 proR hydrogen from 5-enolpyruvylshikimate-3-phosphate (EPSP) to yield chorismate, which is the branch point compound that serves as the starting substrate for the three terminal pathways of aromatic amino acid biosynthesis. This reaction introduces a second double bond into the aromatic ring system. The chain is Chorismate synthase from Caldanaerobacter subterraneus subsp. tengcongensis (strain DSM 15242 / JCM 11007 / NBRC 100824 / MB4) (Thermoanaerobacter tengcongensis).